The chain runs to 299 residues: Oxygen-dependent coproporphyrinogen-III oxidase (299 aa).

Serine 92 contacts substrate. Mn(2+) is bound by residues histidine 96 and histidine 106. Histidine 106 (proton donor) is an active-site residue. Asparagine 108–arginine 110 is a substrate binding site. Residues histidine 145 and histidine 175 each coordinate Mn(2+). An important for dimerization region spans residues tyrosine 240–glutamate 275. Glycine 258 to arginine 260 lines the substrate pocket.

The protein belongs to the aerobic coproporphyrinogen-III oxidase family. As to quaternary structure, homodimer. Mn(2+) is required as a cofactor.

It localises to the cytoplasm. The enzyme catalyses coproporphyrinogen III + O2 + 2 H(+) = protoporphyrinogen IX + 2 CO2 + 2 H2O. It participates in porphyrin-containing compound metabolism; protoporphyrin-IX biosynthesis; protoporphyrinogen-IX from coproporphyrinogen-III (O2 route): step 1/1. Its function is as follows. Involved in the heme biosynthesis. Catalyzes the aerobic oxidative decarboxylation of propionate groups of rings A and B of coproporphyrinogen-III to yield the vinyl groups in protoporphyrinogen-IX. This is Oxygen-dependent coproporphyrinogen-III oxidase from Escherichia coli O157:H7.